Reading from the N-terminus, the 304-residue chain is Elongation factor Ts (304 aa).

Residues 79–82 (TDFV) are involved in Mg(2+) ion dislocation from EF-Tu.

It belongs to the EF-Ts family.

It localises to the cytoplasm. Associates with the EF-Tu.GDP complex and induces the exchange of GDP to GTP. It remains bound to the aminoacyl-tRNA.EF-Tu.GTP complex up to the GTP hydrolysis stage on the ribosome. The sequence is that of Elongation factor Ts from Polaromonas sp. (strain JS666 / ATCC BAA-500).